A 362-amino-acid chain; its full sequence is Probable protein phosphatase 2C 11 (362 aa).

The PPM-type phosphatase domain maps to 23 to 329 (KLGLSSMQGW…DNMTMVLVQF (307 aa)). 4 residues coordinate Mn(2+): Asp-57, Gly-58, Asp-272, and Asp-320.

This sequence belongs to the PP2C family. The cofactor is Mg(2+). Mn(2+) serves as cofactor.

The catalysed reaction is O-phospho-L-seryl-[protein] + H2O = L-seryl-[protein] + phosphate. The enzyme catalyses O-phospho-L-threonyl-[protein] + H2O = L-threonyl-[protein] + phosphate. This is Probable protein phosphatase 2C 11 from Oryza sativa subsp. japonica (Rice).